We begin with the raw amino-acid sequence, 90 residues long: U7-theraphotoxin-Hhn1a 3 (90 aa).

An N-terminal signal peptide occupies residues 1–26 (MKTAIFTVVLALAVFAVLSFGWEANG). Residues 27-50 (KALSEEFTELIHEKEAASETEARE) constitute a propeptide that is removed on maturation. Intrachain disulfides connect cysteine 51/cysteine 65, cysteine 58/cysteine 70, and cysteine 64/cysteine 81.

Belongs to the neurotoxin 10 (Hwtx-1) family. 13 (Hntx-13) subfamily. In terms of tissue distribution, expressed by the venom gland.

The protein localises to the secreted. Its function is as follows. Ion channel inhibitor. This Cyriopagopus hainanus (Chinese bird spider) protein is U7-theraphotoxin-Hhn1a 3.